A 267-amino-acid chain; its full sequence is Hydroxynaphthalene reductase-like protein Arp2 (267 aa).

NADP(+) is bound by residues I25, N45, D71, and N98. Residues S147 and S148 each act as proton donor in the active site. NADP(+) is bound by residues Y162, K166, V195, and T197. Catalysis depends on Y162, which acts as the Proton acceptor. K166 acts as the Lowers pKa of active site Tyr in catalysis.

Belongs to the short-chain dehydrogenases/reductases (SDR) family.

In terms of biological role, hydroxynaphthalene reductase-like protein; part of the Pks2 gene cluster that mediates the formation of infectious structures (appressoria), enabling these fungi to kill insects faster. The product of the Pks2 gene cluster is different from the one of Pks1 and has still not been identified. The chain is Hydroxynaphthalene reductase-like protein Arp2 from Metarhizium guizhouense (strain ARSEF 977).